The chain runs to 453 residues: Tol-Pal system protein TolB (453 aa).

The N-terminal stretch at M1–A39 is a signal peptide.

This sequence belongs to the TolB family. The Tol-Pal system is composed of five core proteins: the inner membrane proteins TolA, TolQ and TolR, the periplasmic protein TolB and the outer membrane protein Pal. They form a network linking the inner and outer membranes and the peptidoglycan layer.

It is found in the periplasm. Its function is as follows. Part of the Tol-Pal system, which plays a role in outer membrane invagination during cell division and is important for maintaining outer membrane integrity. This Gluconobacter oxydans (strain 621H) (Gluconobacter suboxydans) protein is Tol-Pal system protein TolB.